We begin with the raw amino-acid sequence, 253 residues long: TCF3 fusion partner (253 aa).

Disordered regions lie at residues 49–72 and 142–211; these read SGGLGGSGLRERDEEEEAARGRRR and DEGS…PELA. S167 is subject to Phosphoserine. Positions 170–181 are enriched in pro residues; the sequence is RRTPAPPEPGSP. A Phosphothreonine modification is found at T172. A phosphoserine mark is found at S180 and S188. T207 is modified (phosphothreonine). K216 is covalently cross-linked (Glycyl lysine isopeptide (Lys-Gly) (interchain with G-Cter in SUMO2)). The disordered stretch occupies residues 234–253; the sequence is VSRGPDKLLPYPTLASPASD. 2 positions are modified to phosphoserine: S249 and S252.

Interacts with NOL3; translocates NOL3 into the nucleus and negatively regulated TFPT-induced cell death. Component of the chromatin remodeling INO80 complex; specifically part of a complex module associated with the N-terminus of INO80.

It is found in the nucleus. Its function is as follows. Appears to promote apoptosis in a p53/TP53-independent manner. In terms of biological role, putative regulatory component of the chromatin remodeling INO80 complex which is involved in transcriptional regulation, DNA replication and probably DNA repair. This is TCF3 fusion partner (TFPT) from Homo sapiens (Human).